A 192-amino-acid polypeptide reads, in one-letter code: MITISDAAQAHFVKLLADQPEGTHIRVFVISPGTSQAECGVSYCPPDAVESDDIEIEFTGFNAMVDEKSAPFLEDATIDFVTDQLGSQLTLKAPNAKMRKVSGDAPLVERIEYVIQSEINPQLAGHGGNIMLVEITKEGVAVLQFGGGCNGCSQVDITLKDGIEKQLLDMFPGELTGVRDVTDHQHGEHSYA.

2 residues coordinate [4Fe-4S] cluster: cysteine 149 and cysteine 152.

The protein belongs to the NfuA family. In terms of assembly, homodimer. Requires [4Fe-4S] cluster as cofactor.

Its function is as follows. Involved in iron-sulfur cluster biogenesis. Binds a 4Fe-4S cluster, can transfer this cluster to apoproteins, and thereby intervenes in the maturation of Fe/S proteins. Could also act as a scaffold/chaperone for damaged Fe/S proteins. The chain is Fe/S biogenesis protein NfuA from Shewanella baltica (strain OS223).